A 7073-amino-acid chain; its full sequence is Replicase polyprotein 1ab (7073 aa).

The Cytoplasmic portion of the chain corresponds to 1 to 2202 (MESLVLGVNE…NYVKSPKFSK (2202 aa)). Positions 12–127 (THVQLSLPVL…YRNVLLRKNG (116 aa)) constitute a CoV Nsp1 globular domain. Residues 148 to 179 (ELGTDPIEDYEQNWNTKHGSGALRELTRELNG) form the BetaCoV Nsp1 C-terminal domain. Positions 183 to 456 (TRYVDNNFCG…NEDLLEILSR (274 aa)) constitute a CoV Nsp2 N-terminal domain. The Zn(2+) site is built by Cys200, Cys231, His234, His236, Cys323, Cys326, Cys341, Cys344, Cys370, Cys373, His382, and Cys416. A C2H2 region spans residues 200-236 (CIKDFLARAGKSMCTLSEQLDYIESKRGVYCCRDHEH). The interval 323–344 (CNHCDEVSWQTCDFLKATCEHC) is C4. The segment at 370–416 (CPACQDPEIGPEHSVADYHNHSNIETRLRKGGRTRCFGGCVFAYVGC) is C2HC. The 231-residue stretch at 458 to 688 (RVNINIVGDF…IDVVNKALEM (231 aa)) folds into the CoV Nsp2 middle domain. The CoV Nsp2 C-terminal domain occupies 690–818 (IDQVTIAGAK…TNNVFRLKGG (129 aa)). The Ubiquitin-like 1 domain maps to 822 to 930 (KGVTFGEDTV…MYCSFYPPDE (109 aa)). Disordered stretches follow at residues 972–1003 (RVEE…EEPV) and 1175–1198 (RVEA…KSVV). Over residues 974–999 (EEEEEEDWLDDTTEQSEIEPEPEPTP) the composition is skewed to acidic residues. The Macro 1 domain occupies 1003-1169 (VNQFTGYLKL…LYEQVVMDYL (167 aa)). 2 Macro domains span residues 1207–1335 (KIKA…LPSE) and 1343–1470 (ILGT…TSSS). In terms of domain architecture, DPUP spans 1472–1538 (TSEEHFVETV…SLDKLKSLLS (67 aa)). A Ubiquitin-like 2 domain is found at 1542–1597 (VKTIKVFTTVDNTNLHTQLVDMSMTYGQQFGPTYLDGADVTKIKPHVNHEGKTFFV). One can recognise a Peptidase C16 domain in the interval 1611–1875 (YYHTLDESFL…YTEIEPKLDG (265 aa)). Catalysis depends on Cys1651, which acts as the For PL-PRO activity. The Zn(2+) site is built by Cys1729, Cys1732, Cys1764, and Cys1766. The segment at 1729-1766 (CKHCGQKTTTLTGVEAVMYMGTLSYDNLKTGVSIPCVC) adopts a C4-type zinc-finger fold. Catalysis depends on for PL-PRO activity residues His1812 and Asp1826. The 111-residue stretch at 1888-1998 (PIDLVPTQPL…CLWSTKPVDT (111 aa)) folds into the Nucleic acid-binding domain. The 110-residue stretch at 2023–2132 (PTSEEVVENP…LGQAAITTSN (110 aa)) folds into the G2M domain. Residues 2203–2223 (LFTIAMWLLLLSICLGSLICV) traverse the membrane as a helical segment. The HD1 stretch occupies residues 2203-2324 (LFTIAMWLLL…FYLLGLSAIM (122 aa)). Residues 2224–2294 (TAAFGVLLSN…QVTISSYKLD (71 aa)) form the 3Ecto domain. Topologically, residues 2224–2303 (TAAFGVLLSN…DLTILGLAAE (80 aa)) are lumenal. Intrachain disulfides connect Cys2240–Cys2268 and Cys2259–Cys2265. Residues 2304–2324 (WVLAYMLFTKFFYLLGLSAIM) traverse the membrane as a helical segment. Topologically, residues 2325–2754 (QVFFGYFASH…TCFKLMLKAT (430 aa)) are cytoplasmic. Residues 2372–2462 (KSYVHIMDGC…QFKRPINPTD (91 aa)) form a Y1 region. Residues 2372–2740 (KSYVHIMDGC…ITTKISLKGG (369 aa)) enclose the CoV Nsp3 Y domain. Residues His2376, Cys2381, Cys2386, Cys2389, Cys2422, His2425, Cys2429, and Cys2432 each contribute to the Zn(2+) site. Positions 2376–2389 (HIMDGCTSSTCMMC) are ZF1. The tract at residues 2422 to 2432 (CKTHNWNCLNC) is ZF2. Residues 2463 to 2557 (QSSYIVDSVA…LLDQALVSDV (95 aa)) form a Y2 region. Residues 2463–2740 (QSSYIVDSVA…ITTKISLKGG (278 aa)) are coV-Y. The tract at residues 2558–2639 (GDSTEVSVKM…ECLKLSHHSD (82 aa)) is Y3. The interval 2640 to 2740 (LEVTGDSCNN…ITTKISLKGG (101 aa)) is Y4. Residues 2755-2775 (LLCVLAALVCYIVMPVHTLSI) form a helical membrane-spanning segment. Residues 2755-3125 (LLCVLAALVC…WITAIYVFCI (371 aa)) are HD2. Topologically, residues 2776 to 3021 (HDGYTNEIIG…VQPVGALDVS (246 aa)) are lumenal. Residues 3022–3042 (ASVVAGGIIAILVTCAAYYFM) traverse the membrane as a helical segment. At 3043–3076 (KFRRVFGEYNHVVAANALLFLMSFTILCLVPAYS) the chain is on the cytoplasmic side. A helical transmembrane segment spans residues 3077-3097 (FLPGVYSVFYLYLTFYFTNDV). Over 3098 to 3104 (SFLAHLQ) the chain is Lumenal. The chain crosses the membrane as a helical span at residues 3105–3125 (WFAMFSPIVPFWITAIYVFCI). Topologically, residues 3126 to 3563 (SLKHCHWFFN…KGTHHWMLLT (438 aa)) are cytoplasmic. The 99-residue stretch at 3142–3240 (VMFNGVTFST…QTSITSAVLQ (99 aa)) folds into the Nsp4C domain. The Peptidase C30 domain maps to 3241–3546 (SGFRKMAFPS…VRQCSGVTFQ (306 aa)). Catalysis depends on for 3CL-PRO activity residues His3281 and Cys3385. A helical transmembrane segment spans residues 3564 to 3584 (FLTSLLILVQSTQWSLFFFVY). The HD3 stretch occupies residues 3564 to 3776 (FLTSLLILVQ…CCCYFGLFCL (213 aa)). Glu3585 is a topological domain (lumenal). A helical membrane pass occupies residues 3586–3606 (NAFLPFTLGIMAIAACAMLLV). At 3607 to 3611 (KHKHA) the chain is on the cytoplasmic side. The helical transmembrane segment at 3612-3632 (FLCLFLLPSLATVAYFNMVYM) threads the bilayer. The Lumenal portion of the chain corresponds to 3633–3657 (PASWVMRIMTWLELADTSLSGYRLK). Residues 3658–3678 (DCVMYASALVLLILMTARTVY) traverse the membrane as a helical segment. The Cytoplasmic segment spans residues 3679 to 3727 (DDAARRVWTLMNVITLVYKVYYGNALDQAISMWALVISVTSNYSGVVTT). The helical transmembrane segment at 3728–3748 (IMFLARAIVFVCVEYYPLLFI) threads the bilayer. The Lumenal portion of the chain corresponds to 3749–3755 (TGNTLQC). A helical membrane pass occupies residues 3756–3776 (IMLVYCFLGYCCCCYFGLFCL). Topologically, residues 3777–7073 (LNRYFRLTLG…VVSSDILVNN (3297 aa)) are cytoplasmic. In terms of domain architecture, RdRp Nsp7 cofactor spans 3837-3919 (SKMSDVKCTS…EMLDNRATLQ (83 aa)). Residues 3920 to 4117 (AIASEFSSLP…LRANSAVKLQ (198 aa)) form the RdRp Nsp8 cofactor domain. The 113-residue stretch at 4118-4230 (NNELSPVALR…GSLAATVRLQ (113 aa)) folds into the Nsp9 ssRNA-binding domain. Positions 4231–4369 (AGNATEVPAN…CDQLREPLMQ (139 aa)) constitute an ExoN/MTase coactivator domain. 8 residues coordinate Zn(2+): Cys4304, Cys4307, His4313, Cys4320, Cys4347, Cys4350, Cys4358, and Cys4360. 2 zinc fingers span residues 4304-4320 (CLYC…KGFC) and 4347-4360 (CTVC…GCSC). The 255-residue stretch at 4376 to 4630 (FLNRVCGVSA…AAESHMDADL (255 aa)) folds into the NiRAN domain. Mn(2+)-binding residues include Asn4578 and Asp4587. The Nsp12 Interface domain maps to 4635 to 4733 (IKWDLLKYDF…HNQDVNLHSS (99 aa)). Positions 4664, 4670, 4675, 4679, and 4856 each coordinate Zn(2+). The Nsp12 RNA-dependent RNA polymerase domain maps to 4734-5301 (RLSFKELLVY…AMYTPHTVLQ (568 aa)). Residues 4736–4950 (SFKELLVYAA…HQKLLKSIAA (215 aa)) form a rdRp Fingers N-ter region. Residues 4951 to 4989 (TRGATVVIGTSKFYGGWHNMLKTVYSDVETPHLMGWDYP) are rdRp Palm N-ter. A RdRp catalytic domain is found at 4981–5143 (PHLMGWDYPK…CYNSNYAAQG (163 aa)). The rdRp Fingers C-ter stretch occupies residues 4990-5048 (KCDRAMPNMLRIMASLVLARKHNTCCNLSHRFYRLANECAQVLSEMVMCGGSLYVKPGG). Zn(2+)-binding residues include His5011, Cys5014, and Cys5015. The segment at 5049–5184 (TSSGDATTAY…TKGPHEFCSQ (136 aa)) is rdRp Palm C-ter. Residues Ser5128, Asp5129, and Asp5130 contribute to the active site. The segment at 5185–5301 (HTMLVKQGDD…AMYTPHTVLQ (117 aa)) is rdRp Thumb. Residues 5302–5414 (AVGACVLCNS…TDFNAIATCD (113 aa)) enclose the CV ZBD domain. The Zn(2+) site is built by Cys5306, Cys5309, Cys5317, Cys5320, Cys5327, Cys5330, His5334, His5340, Cys5351, Cys5356, Cys5373, and His5376. Positions 5558 to 5739 (NISDEFSSNV…MKTIGPDMFL (182 aa)) constitute a (+)RNA virus helicase ATP-binding domain. An ATP-binding site is contributed by 5583–5590 (GPPGTGKS). Residues 5740–5909 (GTCRRCPAEI…TLQAENVTGL (170 aa)) form the (+)RNA virus helicase C-terminal domain. Residues 5974 to 6189 (MFITREEAIR…RCLAVHECFV (216 aa)) enclose the ExoN domain. Residues Asp5992, Glu5994, and Glu6093 contribute to the active site. Mg(2+) is bound by residues Glu5994 and Glu6093. Positions 6109, 6112, 6128, 6131, 6159, 6163, and 6166 each coordinate Zn(2+). Catalysis depends on residues His6170 and Asp6175. Mg(2+) contacts are provided by His6170 and Asp6175. Residue Cys6181 coordinates Zn(2+). One can recognise an N7-MTase domain in the interval 6198-6429 (YPIIGDELRV…NLWNTFTRLQ (232 aa)). 6233-6239 (DIGNPKA) contacts S-adenosyl-L-methionine. Residues 6316–6330 (CDGGSLYVNKHAFHT) are gpppA-binding. Residues Cys6354, Cys6375, Cys6386, and His6389 each coordinate Zn(2+). One can recognise a Nsp15 N-terminal oligomerization domain in the interval 6430–6490 (SLENVAYNVV…NVAFELWAKR (61 aa)). Residues 6491-6616 (NIKPVPEIKI…YFKKVDGIIQ (126 aa)) form the AV-Nsp11N/CoV-Nsp15M domain. The 140-residue stretch at 6633–6772 (KPRSQMETDF…KDGHVETFYP (140 aa)) folds into the NendoU domain. Active-site residues include His6663, His6678, Lys6718, Lys6821, Asp6905, Lys6945, and Glu6978. The Nidovirus-type SAM-dependent 2'-O-MTase domain maps to 6777-7071 (SQAWQPGVAM…RVVVSSDILV (295 aa)).

Belongs to the coronaviruses polyprotein 1ab family. As to quaternary structure, interacts with host PHB and PHB2. Interacts with papain-like protease nsp3 and non-structural protein 6. In terms of assembly, monomer. Homodimer. Only the homodimer shows catalytic activity. As to quaternary structure, interacts with nsp8 and nsp12 to form the replication-transcription complex (RTC): nsp12, nsp7, two subunits of nsp8, and up to two subunits of nsp13. Eight copies of nsp7 and eight copies of nsp8 assemble to form a heterohexadecamer dsRNA-encircling ring structure. Interacts with nsp7, nsp13 and nsp12 to form the replication-transcription complex (RTC): nsp12, nsp7, two subunits of nsp8, and up to two subunits of nsp13. Eight copies of nsp7 and eight copies of nsp8 assemble to form a heterohexadecamer dsRNA-encircling ring structure. Interacts with ORF6 protein. In terms of assembly, homodimer. Interacts with nsp12. As to quaternary structure, homododecamer. Interacts with proofreading exoribonuclease nsp14 and 2'-O-methyltransferase nsp16; these interactions enhance nsp14 and nsp16 enzymatic activities. Interacts with nsp7 and nsp8 to form the replication-transcription complex (RTC): nsp12, nsp7, two subunits of nsp8, and up to two subunits of nsp13. Interacts with nsp9. In terms of assembly, interacts with nsp8 to form the replication-transcription complex (RTC): nsp12, nsp7, two subunits of nsp8, and up to two subunits of nsp13. As to quaternary structure, interacts (via N-terminus) with host DDX1. Interacts with non-structural protein 10. Homohexamer. In terms of assembly, interacts with nsp10. Requires Zn(2+) as cofactor. It depends on Mn(2+) as a cofactor. Mg(2+) is required as a cofactor. Specific enzymatic cleavages in vivo by its own proteases yield mature proteins. 3C-like proteinase nsp5 liberates nsps 6-16 from the polyprotein. Papain-like and 3C-like proteinases are autocatalytically processed.

The protein localises to the host cytoplasm. It is found in the host endosome. Its subcellular location is the host membrane. The protein resides in the host Golgi apparatus. It localises to the host perinuclear region. The protein localises to the host endoplasmic reticulum. It is found in the host endoplasmic reticulum-Golgi intermediate compartment. It carries out the reaction RNA(n) + a ribonucleoside 5'-triphosphate = RNA(n+1) + diphosphate. The enzyme catalyses ATP + H2O = ADP + phosphate + H(+). The catalysed reaction is TSAVLQ-|-SGFRK-NH2 and SGVTFQ-|-GKFKK the two peptides corresponding to the two self-cleavage sites of the SARS 3C-like proteinase are the two most reactive peptide substrates. The enzyme exhibits a strong preference for substrates containing Gln at P1 position and Leu at P2 position.. It catalyses the reaction Thiol-dependent hydrolysis of ester, thioester, amide, peptide and isopeptide bonds formed by the C-terminal Gly of ubiquitin (a 76-residue protein attached to proteins as an intracellular targeting signal).. It carries out the reaction a 5'-end (N(7)-methyl 5'-triphosphoguanosine)-ribonucleoside in mRNA + S-adenosyl-L-methionine = a 5'-end (N(7)-methyl 5'-triphosphoguanosine)-(2'-O-methyl-ribonucleoside) in mRNA + S-adenosyl-L-homocysteine + H(+). The enzyme catalyses uridylyl-uridylyl-ribonucleotide-RNA = a 3'-end uridylyl-2',3'-cyclophospho-uridine-RNA + a 5'-end dephospho-ribonucleoside-RNA. The catalysed reaction is a 5'-end (5'-triphosphoguanosine)-ribonucleoside in mRNA + S-adenosyl-L-methionine = a 5'-end (N(7)-methyl 5'-triphosphoguanosine)-ribonucleoside in mRNA + S-adenosyl-L-homocysteine. It catalyses the reaction a 5'-end diphospho-ribonucleoside in mRNA + GTP + H(+) = a 5'-end (5'-triphosphoguanosine)-ribonucleoside in mRNA + diphosphate. With respect to regulation, inhibited by Remdesivir (GS-5734). Multifunctional protein involved in the transcription and replication of viral RNAs. Contains the proteinases responsible for the cleavages of the polyprotein. Its function is as follows. Inhibits host translation by interacting with the 40S ribosomal subunit. The nsp1-40S ribosome complex further induces an endonucleolytic cleavage near the 5'UTR of host mRNAs, targeting them for degradation. Viral mRNAs are not susceptible to nsp1-mediated endonucleolytic RNA cleavage thanks to the presence of a 5'-end leader sequence and are therefore protected from degradation. By suppressing host gene expression, nsp1 facilitates efficient viral gene expression in infected cells and evasion from host immune response. May disrupt nuclear pore function by binding and displacing host NUP93. In terms of biological role, may play a role in the modulation of host cell survival signaling pathway by interacting with host PHB and PHB2. Indeed, these two proteins play a role in maintaining the functional integrity of the mitochondria and protecting cells from various stresses. Functionally, responsible for the cleavages located at the N-terminus of the replicase polyprotein. In addition, PL-PRO possesses a deubiquitinating/deISGylating activity and processes both 'Lys-48'- and 'Lys-63'-linked polyubiquitin chains from cellular substrates. Plays a role in host membrane rearrangement that leads to creation of cytoplasmic double-membrane vesicles (DMV) necessary for viral replication. Nsp3, nsp4 and nsp6 together are sufficient to form DMV. Antagonizes innate immune induction of type I interferon by blocking the phosphorylation, dimerization and subsequent nuclear translocation of host IRF3. Also prevents host NF-kappa-B signaling. Plays a role in host membrane rearrangement that leads to creation of cytoplasmic double-membrane vesicles (DMV) necessary for viral replication. Alone appears incapable to induce membrane curvature, but together with nsp3 is able to induce paired membranes. Nsp3, nsp4 and nsp6 together are sufficient to form DMV. Its function is as follows. Cleaves the C-terminus of replicase polyprotein at 11 sites. Recognizes substrates containing the core sequence [ILMVF]-Q-|-[SGACN]. May cleave human NLRP1 in lung epithelial cells, thereby activating the NLRP1 inflammasome pathway. Also able to bind an ADP-ribose-1''-phosphate (ADRP). May cleave host ATP6V1G1 thereby modifying host vacuoles intracellular pH. In terms of biological role, plays a role in host membrane rearrangement that leads to creation of cytoplasmic double-membrane vesicles (DMV) necessary for viral replication. Nsp3, nsp4 and nsp6 together are sufficient to form DMV. Plays a role in the initial induction of autophagosomes from host endoplasmic reticulum. Later, limits the expansion of these phagosomes that are no longer able to deliver viral components to lysosomes. Functionally, forms a hexadecamer with nsp8 (8 subunits of each) that may participate in viral replication by acting as a primase. Alternatively, may synthesize substantially longer products than oligonucleotide primers. Forms a hexadecamer with nsp7 (8 subunits of each) that may participate in viral replication by acting as a primase. Alternatively, may synthesize substantially longer products than oligonucleotide primers. Its function is as follows. Forms a primer, NSP9-pU, which is utilized by the polymerase for the initiation of RNA chains. Interacts with ribosome signal recognition particle RNA (SRP). Together with NSP8, suppress protein integration into the cell membrane, thereby disrupting host immune defenses. In terms of biological role, plays a pivotal role in viral transcription by stimulating both nsp14 3'-5' exoribonuclease and nsp16 2'-O-methyltransferase activities. Therefore plays an essential role in viral mRNAs cap methylation. Functionally, RNA-directed RNA polymerase that catalyzes the transcription of viral genomic and subgenomic RNAs. Acts in complex with nsp7 and nsp8 to transcribe both the minus and positive strands of genomic RNA. The kinase-like NiRAN domain of NSP12 attaches one or more nucleotides to the amino terminus of NSP9, forming a covalent RNA-protein intermediate that serves as transcription/replication primer. Subgenomic RNAs (sgRNAs) are formed by discontinuous transcription: The polymerase has the ability to pause at transcription-regulating sequences (TRS) and jump to the leader TRS, resulting in a major deletion. This creates a series of subgenomic RNAs that are replicated, transcribed and translated. In addition, Nsp12 is a subunit of the viral RNA capping enzyme that catalyzes the RNA guanylyltransferase reaction for genomic and sub-genomic RNAs. Subsequently, the NiRAN domain transfers RNA to GDP, and forms the core cap structure GpppA-RNA. Multi-functional protein with a zinc-binding domain in N-terminus displaying RNA and DNA duplex-unwinding activities with 5' to 3' polarity. Activity of helicase is dependent on magnesium. Its function is as follows. Plays a role in viral RNA synthesis through two distinct activities. The N7-guanine methyltransferase activity plays a role in the formation of the cap structure GpppA-RNA. The proofreading exoribonuclease reduces the sensitivity of the virus to RNA mutagens during replication. This activity acts on both ssRNA and dsRNA in a 3'-5' direction. In terms of biological role, plays a role in viral transcription/replication and prevents the simultaneous activation of host cell dsRNA sensors, such as MDA5/IFIH1, OAS, and PKR. Acts by degrading the 5'-polyuridines generated during replication of the poly(A) region of viral genomic and subgenomic RNAs. Catalyzes a two-step reaction in which a 2'3'-cyclic phosphate (2'3'-cP) is first generated by 2'-O transesterification, which is then hydrolyzed to a 3'-phosphate (3'-P). If not degraded, poly(U) RNA would hybridize with poly(A) RNA tails and activate host dsRNA sensors. Functionally, methyltransferase that mediates mRNA cap 2'-O-ribose methylation to the 5'-cap structure of viral mRNAs. N7-methyl guanosine cap is a prerequisite for binding of nsp16. Therefore plays an essential role in viral mRNAs cap methylation which is essential to evade immune system. This Severe acute respiratory syndrome coronavirus (SARS-CoV) protein is Replicase polyprotein 1ab (rep).